Here is a 176-residue protein sequence, read N- to C-terminus: ATP-dependent protease subunit HslV (176 aa).

The active site involves Thr6. Residues Ser161, Cys164, and Thr167 each contribute to the Na(+) site.

The protein belongs to the peptidase T1B family. HslV subfamily. As to quaternary structure, a double ring-shaped homohexamer of HslV is capped on each side by a ring-shaped HslU homohexamer. The assembly of the HslU/HslV complex is dependent on binding of ATP.

It is found in the cytoplasm. The enzyme catalyses ATP-dependent cleavage of peptide bonds with broad specificity.. Its activity is regulated as follows. Allosterically activated by HslU binding. Functionally, protease subunit of a proteasome-like degradation complex believed to be a general protein degrading machinery. In Pseudothermotoga lettingae (strain ATCC BAA-301 / DSM 14385 / NBRC 107922 / TMO) (Thermotoga lettingae), this protein is ATP-dependent protease subunit HslV.